Reading from the N-terminus, the 509-residue chain is Phosphoprotein (509 aa).

Disordered stretches follow at residues 33 to 84, 131 to 236, and 256 to 281; these read LESW…LGFR, VQAN…DGNS, and PESR…SAKT. Residues 44–65 show a composition bias toward polar residues; that stretch reads GRATPNPDTSEGDHQNINQSCS. A compositionally biased stretch (acidic residues) spans 146 to 157; sequence DGSDDSDVDSGP. Ser151 carries the phosphoserine modification. Residues 178–187 show a composition bias toward basic and acidic residues; the sequence is RSTDVEKLEG. A compositionally biased stretch (polar residues) spans 221–236; the sequence is SRPSAQSIKKGTDGNS. Positions 303–376 are multimerization; that stretch reads SEFEYEDDLF…LSSIMIAIPG (74 aa). The interval 459-509 is interaction with the nucleocapsid (N-RNA); sequence SSRSVIRSIIKSSKLNIDHKDYLLDLLNDVKGSKDLKEFHKMLTAILAKQP.

It belongs to the morbillivirus P protein family. Homotetramer. Interacts (via multimerization domain) with polymerase L; this interaction forms the polymerase L-P complex. Interacts (via N-terminus) with N0 (via Ncore); this interaction allows P to chaperon N0 to avoid N polymerization before encapsidation. Interacts (via C-terminus) with N-RNA template; this interaction positions the polymerase on the template for both transcription and replication. Interacts with host ISG15; this interaction disrupts the activity of the N0-P complex. Post-translationally, phosphorylation on serines by host CK2 is necessary for the formation of viral factories.

Functionally, essential cofactor of the RNA polymerase L that plays a central role in the transcription and replication by forming the polymerase complex with RNA polymerase L and recruiting L to the genomic N-RNA template for RNA synthesis. Also plays a central role in the encapsidation of nascent RNA chains by forming the encapsidation complex with the nucleocapsid protein N (N-P complex). Acts as a chaperone for newly synthesized free N protein, so-called N0, allowing encapsidation of nascent RNA chains during replication. The nucleoprotein protein N prevents excessive phosphorylation of P, which leads to down-regulation of viral transcription/ replication. Participates, together with N, in the formation of viral factories (viroplasms), which are large inclusions in the host cytoplasm where replication takes place. In Capra hircus (Goat), this protein is Phosphoprotein (P/V).